The chain runs to 239 residues: Metallo-beta-lactamase IND-1 (239 aa).

Positions 1–20 (MKKSIRFFIVSILLSPFASA) are cleaved as a signal peptide. Residues histidine 96, histidine 98, aspartate 100, histidine 159, and cysteine 178 each contribute to the Zn(2+) site. Lysine 181 contacts a beta-lactam. Position 220 (histidine 220) interacts with Zn(2+).

The protein belongs to the metallo-beta-lactamase superfamily. Class-B beta-lactamase family. Monomer. Requires Zn(2+) as cofactor.

Its subcellular location is the periplasm. The catalysed reaction is a beta-lactam + H2O = a substituted beta-amino acid. Its activity is regulated as follows. Inhibited by chelating agents such as EDTA. Not susceptible to inactivation by the beta-lactamase-blocking agent clavulanic acid. Its function is as follows. Class B beta-lactamase which confers resistance to the beta-lactam antibiotics, including penicillins, cephalosporins and carbapenems. Acts via hydrolysis of the beta-lactam ring. Has penicillin-, cephalosporin- and carbapenem-hydrolyzing activities. This chain is Metallo-beta-lactamase IND-1, found in Chryseobacterium indologenes (Flavobacterium indologenes).